A 341-amino-acid chain; its full sequence is S-adenosylmethionine:tRNA ribosyltransferase-isomerase (341 aa).

Belongs to the QueA family. Monomer.

It localises to the cytoplasm. It carries out the reaction 7-aminomethyl-7-carbaguanosine(34) in tRNA + S-adenosyl-L-methionine = epoxyqueuosine(34) in tRNA + adenine + L-methionine + 2 H(+). Its pathway is tRNA modification; tRNA-queuosine biosynthesis. In terms of biological role, transfers and isomerizes the ribose moiety from AdoMet to the 7-aminomethyl group of 7-deazaguanine (preQ1-tRNA) to give epoxyqueuosine (oQ-tRNA). The protein is S-adenosylmethionine:tRNA ribosyltransferase-isomerase of Pelotomaculum thermopropionicum (strain DSM 13744 / JCM 10971 / SI).